We begin with the raw amino-acid sequence, 192 residues long: Molybdenum cofactor guanylyltransferase (192 aa).

GTP-binding residues include K21, D67, and D101. Mg(2+) is bound at residue D101.

Belongs to the MobA family. In terms of assembly, monomer. Mg(2+) serves as cofactor.

The protein resides in the cytoplasm. The enzyme catalyses Mo-molybdopterin + GTP + H(+) = Mo-molybdopterin guanine dinucleotide + diphosphate. Functionally, transfers a GMP moiety from GTP to Mo-molybdopterin (Mo-MPT) cofactor (Moco or molybdenum cofactor) to form Mo-molybdopterin guanine dinucleotide (Mo-MGD) cofactor. The sequence is that of Molybdenum cofactor guanylyltransferase from Neisseria meningitidis serogroup C / serotype 2a (strain ATCC 700532 / DSM 15464 / FAM18).